The chain runs to 149 residues: Calmodulin (149 aa).

A2 is subject to N-acetylalanine. EF-hand domains are found at residues 8–43 (EQVS…LGQN), 44–79 (PSES…KMKD), 81–116 (DSEE…IGEK), and 117–149 (LTDD…MMQK). 19 residues coordinate Ca(2+): D21, D23, D25, Q27, E32, D57, D59, N61, T63, E68, D94, D96, N98, E105, D130, D132, D134, R136, and E141.

The protein belongs to the calmodulin family.

In terms of biological role, calmodulin mediates the control of a large number of enzymes, ion channels and other proteins by Ca(2+). Among the enzymes to be stimulated by the calmodulin-Ca(2+) complex are a number of protein kinases and phosphatases. This is Calmodulin from Colletotrichum gloeosporioides (Anthracnose fungus).